Consider the following 142-residue polypeptide: MGRGLFAARKLMENRKKFRWSDRRFVRRTLGLAAKADPLEGAPMARGIVLEKIGIEARQPNSAIRKAVRVQLIKNGRQITAFCPGDGAINFIDEHDEVIVEKIGGRMGRSMGDIPGVRYKVVKVNNTSLRELVRGRKEKRLR.

It belongs to the universal ribosomal protein uS12 family. As to quaternary structure, part of the 30S ribosomal subunit.

With S4 and S5 plays an important role in translational accuracy. Located at the interface of the 30S and 50S subunits. In Archaeoglobus fulgidus (strain ATCC 49558 / DSM 4304 / JCM 9628 / NBRC 100126 / VC-16), this protein is Small ribosomal subunit protein uS12.